The chain runs to 352 residues: Ferrochelatase (352 aa).

Fe cation contacts are provided by histidine 222 and glutamate 303.

It belongs to the ferrochelatase family.

It is found in the cytoplasm. The enzyme catalyses heme b + 2 H(+) = protoporphyrin IX + Fe(2+). Its pathway is porphyrin-containing compound metabolism; protoheme biosynthesis; protoheme from protoporphyrin-IX: step 1/1. In terms of biological role, catalyzes the ferrous insertion into protoporphyrin IX. This chain is Ferrochelatase, found in Brucella canis (strain ATCC 23365 / NCTC 10854 / RM-666).